We begin with the raw amino-acid sequence, 337 residues long: DNA-directed RNA polymerase subunit alpha (337 aa).

The tract at residues 1–233 (MVREKVTVST…DLFIPFLHIE (233 aa)) is alpha N-terminal domain (alpha-NTD). Residues 265 to 337 (KKIALKSIFI…FVIDLAKNEF (73 aa)) are alpha C-terminal domain (alpha-CTD).

Belongs to the RNA polymerase alpha chain family. In terms of assembly, in plastids the minimal PEP RNA polymerase catalytic core is composed of four subunits: alpha, beta, beta', and beta''. When a (nuclear-encoded) sigma factor is associated with the core the holoenzyme is formed, which can initiate transcription.

It is found in the plastid. Its subcellular location is the chloroplast. The catalysed reaction is RNA(n) + a ribonucleoside 5'-triphosphate = RNA(n+1) + diphosphate. DNA-dependent RNA polymerase catalyzes the transcription of DNA into RNA using the four ribonucleoside triphosphates as substrates. The sequence is that of DNA-directed RNA polymerase subunit alpha from Nicotiana tomentosiformis (Tobacco).